Consider the following 94-residue polypeptide: Protein canopy homolog 1 (94 aa).

Belongs to the canopy family.

The chain is Protein canopy homolog 1 (Cnpy1) from Mus musculus (Mouse).